A 92-amino-acid chain; its full sequence is Small ribosomal subunit protein uS19 (92 aa).

It belongs to the universal ribosomal protein uS19 family.

Its function is as follows. Protein S19 forms a complex with S13 that binds strongly to the 16S ribosomal RNA. This Bifidobacterium longum subsp. infantis (strain ATCC 15697 / DSM 20088 / JCM 1222 / NCTC 11817 / S12) protein is Small ribosomal subunit protein uS19.